The chain runs to 419 residues: Serine hydroxymethyltransferase (419 aa).

Residues L121 and 125 to 127 contribute to the (6S)-5,6,7,8-tetrahydrofolate site; that span reads GHL. K230 is subject to N6-(pyridoxal phosphate)lysine. 355–357 is a binding site for (6S)-5,6,7,8-tetrahydrofolate; that stretch reads SPF.

Belongs to the SHMT family. In terms of assembly, homodimer. The cofactor is pyridoxal 5'-phosphate.

The protein localises to the cytoplasm. It carries out the reaction (6R)-5,10-methylene-5,6,7,8-tetrahydrofolate + glycine + H2O = (6S)-5,6,7,8-tetrahydrofolate + L-serine. Its pathway is one-carbon metabolism; tetrahydrofolate interconversion. It participates in amino-acid biosynthesis; glycine biosynthesis; glycine from L-serine: step 1/1. In terms of biological role, catalyzes the reversible interconversion of serine and glycine with tetrahydrofolate (THF) serving as the one-carbon carrier. This reaction serves as the major source of one-carbon groups required for the biosynthesis of purines, thymidylate, methionine, and other important biomolecules. Also exhibits THF-independent aldolase activity toward beta-hydroxyamino acids, producing glycine and aldehydes, via a retro-aldol mechanism. In Streptococcus equi subsp. equi (strain 4047), this protein is Serine hydroxymethyltransferase.